We begin with the raw amino-acid sequence, 187 residues long: Phosphatidylethanolamine-binding protein 1 (187 aa).

Serine 13 bears the Phosphoserine mark. Threonine 42 is subject to Phosphothreonine. Serine 52, serine 98, and serine 153 each carry phosphoserine. The interaction with RAF1 stretch occupies residues 93 to 134 (KGNDISSGTVLSDYVGSGPPKGTGLHRYVWLVYEQSGPLKCD).

Belongs to the phosphatidylethanolamine-binding protein family. Has a tendency to form dimers by disulfide cross-linking. Interacts with RAF1 and this interaction is enhanced if RAF1 is phosphorylated on residues 'Ser-338', 'Ser-339', 'Tyr-340' and 'Tyr-341'. Interacts with ALOX15; in response to IL13/interleukin-13, prevents the interaction of PEBP1 with RAF1 to activate the ERK signaling cascade.

The protein localises to the cytoplasm. Functionally, binds ATP, opioids and phosphatidylethanolamine. Has lower affinity for phosphatidylinositol and phosphatidylcholine. Serine protease inhibitor which inhibits thrombin, neuropsin and chymotrypsin but not trypsin, tissue type plasminogen activator and elastase. Involved in the positive regulation of epithelial cell migration. Inhibits the kinase activity of RAF1 by inhibiting its activation and by dissociating the RAF1/MEK complex and acting as a competitive inhibitor of MEK phosphorylation. Its function is as follows. HCNP may be involved in the function of the presynaptic cholinergic neurons of the central nervous system. HCNP increases the production of choline acetyltransferase but not acetylcholinesterase. Seems to be mediated by a specific receptor. This Canis lupus familiaris (Dog) protein is Phosphatidylethanolamine-binding protein 1 (PEBP1).